The following is a 513-amino-acid chain: ATP synthase subunit alpha (513 aa).

169 to 176 contributes to the ATP binding site; it reads GDRQTGKT.

Belongs to the ATPase alpha/beta chains family. In terms of assembly, F-type ATPases have 2 components, CF(1) - the catalytic core - and CF(0) - the membrane proton channel. CF(1) has five subunits: alpha(3), beta(3), gamma(1), delta(1), epsilon(1). CF(0) has three main subunits: a(1), b(2) and c(9-12). The alpha and beta chains form an alternating ring which encloses part of the gamma chain. CF(1) is attached to CF(0) by a central stalk formed by the gamma and epsilon chains, while a peripheral stalk is formed by the delta and b chains.

It is found in the cell inner membrane. It carries out the reaction ATP + H2O + 4 H(+)(in) = ADP + phosphate + 5 H(+)(out). Functionally, produces ATP from ADP in the presence of a proton gradient across the membrane. The alpha chain is a regulatory subunit. This chain is ATP synthase subunit alpha, found in Haemophilus influenzae (strain PittGG).